The following is a 119-amino-acid chain: Putative membrane protein insertion efficiency factor (119 aa).

It belongs to the UPF0161 family.

It localises to the cell inner membrane. Functionally, could be involved in insertion of integral membrane proteins into the membrane. The polypeptide is Putative membrane protein insertion efficiency factor (Brucella anthropi (strain ATCC 49188 / DSM 6882 / CCUG 24695 / JCM 21032 / LMG 3331 / NBRC 15819 / NCTC 12168 / Alc 37) (Ochrobactrum anthropi)).